Consider the following 633-residue polypeptide: ABC transporter G family member 1 (633 aa).

Residues 23–265 (LTWEDLWVTA…FALSGFPCPT (243 aa)) enclose the ABC transporter domain. 60-67 (GPSGSGKS) is an ATP binding site. One can recognise an ABC transmembrane type-2 domain in the interval 340–552 (TQSLVLTRRS…AYEGMFKNEF (213 aa)). N-linked (GlcNAc...) asparagine glycosylation occurs at N352. 6 consecutive transmembrane segments (helical) span residues 364–384 (LAVY…VGFS), 394–414 (MLMF…PSFV), 440–460 (LSAM…AYFM), 470–490 (FIYF…LMMI), 498–518 (FLMG…SGGF), and 580–600 (IDLV…LLVV).

This sequence belongs to the ABC transporter superfamily. ABCG family. In terms of assembly, homodimer. Restricted to the petals, with the highest expression in the limb and, to a lesser extent, in petal tubes, probably in both epidermal and mesophyll cell layers.

Its subcellular location is the cell membrane. Its function is as follows. ABC transporter controlling the release of volatile organic compounds (VOCs), including floral volatile benzenoids and phenylpropanoids (FVBP), in flowers of fragrant cultivars (e.g. cv. Mitchell and cv. V26). This scent, mostly produced in the evening and night by the petals, attracts the pollinators (e.g. the night-active hawkmoth pollinator Manduca sexta). This chain is ABC transporter G family member 1, found in Petunia hybrida (Petunia).